We begin with the raw amino-acid sequence, 319 residues long: Lipopolysaccharide heptosyltransferase 1 (319 aa).

ADP-L-glycero-beta-D-manno-heptose is bound by residues Thr-187, Thr-188, Lys-192, Glu-222, Met-242, Asp-261, Thr-262, Gly-263, and His-266.

This sequence belongs to the glycosyltransferase 9 family.

It is found in the cell inner membrane. It catalyses the reaction an alpha-Kdo-(2-&gt;4)-alpha-Kdo-(2-&gt;6)-lipid A + ADP-L-glycero-beta-D-manno-heptose = an L-alpha-D-Hep-(1-&gt;5)-[alpha-Kdo-(2-&gt;4)]-alpha-Kdo-(2-&gt;6)-lipid A + ADP + H(+). It carries out the reaction alpha-Kdo-(2-&gt;4)-alpha-Kdo-(2-&gt;6)-lipid A (E. coli) + ADP-L-glycero-beta-D-manno-heptose = L-alpha-D-Hep-(1-&gt;5)-[alpha-Kdo-(2-&gt;4)]-alpha-Kdo-(2-&gt;6)-lipid A (E. coli) + ADP + H(+). It participates in bacterial outer membrane biogenesis; LPS core biosynthesis. Functionally, glycosyltransferase involved in the biosynthesis of the core oligosaccharide region of lipopolysaccharide (LPS). Catalyzes the addition of the first heptose unit to one 3-deoxy-D-manno-octulosonic acid (Kdo) residue of the Kdo2-lipid A module. The analog ADP-mannose can serve as an alternative donor in place of ADP-L-glycero-D-manno-heptose for the glycosylation of Kdo2-lipid A. Displays no activity with ADP-glucose, GDP-mannose, UDP-glucose or UDP-galactose. The protein is Lipopolysaccharide heptosyltransferase 1 of Escherichia coli (strain K12).